A 308-amino-acid chain; its full sequence is Small ribosomal subunit protein uS5c (308 aa).

Residues methionine 1–tyrosine 55 constitute a chloroplast transit peptide. Positions phenylalanine 152–valine 215 constitute an S5 DRBM domain.

Component of the chloroplast small ribosomal subunit (SSU). Mature 70S chloroplast ribosomes of higher plants consist of a small (30S) and a large (50S) subunit. The 30S small subunit contains 1 molecule of ribosomal RNA (16S rRNA) and 24 different proteins. The 50S large subunit contains 3 rRNA molecules (23S, 5S and 4.5S rRNA) and 33 different proteins. uS5c binds directly to 16S ribosomal RNA.

It localises to the plastid. It is found in the chloroplast. Its function is as follows. Component of the chloroplast ribosome (chloro-ribosome), a dedicated translation machinery responsible for the synthesis of chloroplast genome-encoded proteins, including proteins of the transcription and translation machinery and components of the photosynthetic apparatus. The protein is Small ribosomal subunit protein uS5c (rps5) of Spinacia oleracea (Spinach).